Reading from the N-terminus, the 94-residue chain is DNA-binding protein HU (94 aa).

The protein belongs to the bacterial histone-like protein family.

Histone-like DNA-binding protein which is capable of wrapping DNA to stabilize it, and thus to prevent its denaturation under extreme environmental conditions. The polypeptide is DNA-binding protein HU (hup) (Xylella fastidiosa (strain 9a5c)).